We begin with the raw amino-acid sequence, 189 residues long: NADH-quinone oxidoreductase subunit B (189 aa).

[4Fe-4S] cluster is bound by residues C39, C40, C104, and C135.

Belongs to the complex I 20 kDa subunit family. NDH-1 is composed of 14 different subunits. Subunits NuoB, C, D, E, F, and G constitute the peripheral sector of the complex. [4Fe-4S] cluster is required as a cofactor.

It is found in the cell inner membrane. It carries out the reaction a quinone + NADH + 5 H(+)(in) = a quinol + NAD(+) + 4 H(+)(out). NDH-1 shuttles electrons from NADH, via FMN and iron-sulfur (Fe-S) centers, to quinones in the respiratory chain. The immediate electron acceptor for the enzyme in this species is believed to be a menaquinone. Couples the redox reaction to proton translocation (for every two electrons transferred, four hydrogen ions are translocated across the cytoplasmic membrane), and thus conserves the redox energy in a proton gradient. The polypeptide is NADH-quinone oxidoreductase subunit B (Pelodictyon phaeoclathratiforme (strain DSM 5477 / BU-1)).